The chain runs to 362 residues: 3-dehydroquinate synthase (362 aa).

NAD(+) contacts are provided by residues 71–76, 105–109, 129–130, Lys-142, Lys-151, and 169–172; these read DGEQYK, GVIGD, TT, and CLKT. Zn(2+) is bound by residues Glu-184, His-247, and His-264.

The protein belongs to the sugar phosphate cyclases superfamily. Dehydroquinate synthase family. The cofactor is NAD(+). It depends on Co(2+) as a cofactor. Requires Zn(2+) as cofactor.

The protein resides in the cytoplasm. It carries out the reaction 7-phospho-2-dehydro-3-deoxy-D-arabino-heptonate = 3-dehydroquinate + phosphate. Its pathway is metabolic intermediate biosynthesis; chorismate biosynthesis; chorismate from D-erythrose 4-phosphate and phosphoenolpyruvate: step 2/7. In terms of biological role, catalyzes the conversion of 3-deoxy-D-arabino-heptulosonate 7-phosphate (DAHP) to dehydroquinate (DHQ). This chain is 3-dehydroquinate synthase, found in Salmonella typhi.